Consider the following 82-residue polypeptide: Sec-independent protein translocase protein TatA (82 aa).

The chain crosses the membrane as a helical span at residues 1–21 (MGSFSIWHWLIVLLIVVMVFG). Residues 46-82 (GASTDDSATTSAPAGQVTNNSTAADKTTIDVEAKHKS) are disordered. Over residues 49–70 (TDDSATTSAPAGQVTNNSTAAD) the composition is skewed to polar residues. The segment covering 72–82 (TTIDVEAKHKS) has biased composition (basic and acidic residues).

The protein belongs to the TatA/E family. In terms of assembly, the Tat system comprises two distinct complexes: a TatABC complex, containing multiple copies of TatA, TatB and TatC subunits, and a separate TatA complex, containing only TatA subunits. Substrates initially bind to the TatABC complex, which probably triggers association of the separate TatA complex to form the active translocon.

It is found in the cell inner membrane. In terms of biological role, part of the twin-arginine translocation (Tat) system that transports large folded proteins containing a characteristic twin-arginine motif in their signal peptide across membranes. TatA could form the protein-conducting channel of the Tat system. The protein is Sec-independent protein translocase protein TatA of Acidovorax sp. (strain JS42).